Here is a 132-residue protein sequence, read N- to C-terminus: Small ribosomal subunit protein uS8 (132 aa).

It belongs to the universal ribosomal protein uS8 family. As to quaternary structure, part of the 30S ribosomal subunit. Contacts proteins S5 and S12.

In terms of biological role, one of the primary rRNA binding proteins, it binds directly to 16S rRNA central domain where it helps coordinate assembly of the platform of the 30S subunit. This is Small ribosomal subunit protein uS8 from Borrelia garinii subsp. bavariensis (strain ATCC BAA-2496 / DSM 23469 / PBi) (Borreliella bavariensis).